Consider the following 182-residue polypeptide: Core-binding factor subunit beta (182 aa).

Position 173 is a phosphoserine (Ala-173).

It belongs to the CBF-beta family. In terms of assembly, heterodimer with RUNX1, RUNX2 and RUNX3. Interacts with COPRS. Found in a complex with PRMT5 and RUNX1. As to quaternary structure, (Microbial infection) Interacts with HIV-1 Vif; forming an active cullin-5-RING E3 ubiquitin-protein ligase complex (ECS complex).

Its subcellular location is the nucleus. Its function is as follows. Forms the heterodimeric complex core-binding factor (CBF) with RUNX family proteins (RUNX1, RUNX2, and RUNX3). RUNX members modulate the transcription of their target genes through recognizing the core consensus binding sequence 5'-TGTGGT-3', or very rarely, 5'-TGCGGT-3', within their regulatory regions via their runt domain, while CBFB is a non-DNA-binding regulatory subunit that allosterically enhances the sequence-specific DNA-binding capacity of RUNX. The heterodimers bind to the core site of a number of enhancers and promoters, including murine leukemia virus, polyomavirus enhancer, T-cell receptor enhancers, LCK, IL3 and GM-CSF promoters. CBF complexes repress ZBTB7B transcription factor during cytotoxic (CD8+) T cell development. They bind to RUNX-binding sequence within the ZBTB7B locus acting as transcriptional silencer and allowing for cytotoxic T cell differentiation. In terms of biological role, (Microbial infection) Following infection, hijacked by the HIV-1 Vif protein, leading to the formation a cullin-5-RING E3 ubiquitin-protein ligase complex (ECS complex) that catalyzes ubiquitination and degradation of APOBEC3F and APOBEC3G. The complex can also ubiquitinate APOBEC3H to some extent. Association with HIV-1 Vif protein also inhibits the transcription coactivator activity of CBFB/CBF-beta. The protein is Core-binding factor subunit beta (CBFB) of Homo sapiens (Human).